The primary structure comprises 543 residues: Protein DETOXIFICATION 47, chloroplastic (543 aa).

Residues 1–30 (MLIKSQRLTLFSPLLSKTRRIPVNSHQTLV) constitute a chloroplast transit peptide. The stretch at 55–94 (VIRRRIKLERVTRNCVRIDREIDEEEEEEEKERGDLVKQS) forms a coiled coil. The next 12 membrane-spanning stretches (helical) occupy residues 107-127 (GPAM…TVVI), 135-155 (LAAL…FMFL), 181-201 (VLLF…RLFG), 228-248 (GLAW…LGMK), 256-276 (ALAA…LFLG), 278-298 (GIAG…YMMM), 319-339 (LWKI…KIAF), 342-362 (FIIY…QVMA), 406-426 (IIGA…PGLF), 443-463 (LLIP…LEGT), 472-492 (FVSS…MFVT), and 497-517 (GLLG…GLYL).

It belongs to the multi antimicrobial extrusion (MATE) (TC 2.A.66.1) family. As to expression, preferentially expressed in the epidermal cells.

The protein resides in the plastid. It localises to the chloroplast membrane. Its function is as follows. Functions as a multidrug and toxin extrusion transporter in the export of salicylic acid (SA) from the chloroplast to the cytoplasm. Plays an essential function in plant defense via the pathogen-induced salicylic acid (SA) accumulation. Also acts as a key component of the Age-related resistance (ARR) pathway. This Arabidopsis thaliana (Mouse-ear cress) protein is Protein DETOXIFICATION 47, chloroplastic.